A 206-amino-acid chain; its full sequence is Octanoyltransferase (206 aa).

The region spanning 30–206 is the BPL/LPL catalytic domain; it reads PETNDEIWLV…EFVTLLNNSI (177 aa). Substrate contacts are provided by residues 69–76, 137–139, and 150–152; these read RGGQVTYH, SLG, and GIA. Catalysis depends on Cys168, which acts as the Acyl-thioester intermediate.

The protein belongs to the LipB family.

The protein localises to the cytoplasm. It carries out the reaction octanoyl-[ACP] + L-lysyl-[protein] = N(6)-octanoyl-L-lysyl-[protein] + holo-[ACP] + H(+). It participates in protein modification; protein lipoylation via endogenous pathway; protein N(6)-(lipoyl)lysine from octanoyl-[acyl-carrier-protein]: step 1/2. Its function is as follows. Catalyzes the transfer of endogenously produced octanoic acid from octanoyl-acyl-carrier-protein onto the lipoyl domains of lipoate-dependent enzymes. Lipoyl-ACP can also act as a substrate although octanoyl-ACP is likely to be the physiological substrate. This Francisella tularensis subsp. novicida (strain U112) protein is Octanoyltransferase.